Reading from the N-terminus, the 475-residue chain is CAAX prenyl protease 1 homolog (475 aa).

Residues 1 to 18 (MGMWASLDALWEMPAEKR) lie on the Lumenal side of the membrane. Residues 19 to 39 (IFGAVLLFSWTVYLWETFLAQ) form a helical membrane-spanning segment. At 40 to 81 (RQRRIYKTTTHVPPELGQIMDSETFEKSRLYQLDKSTFSFWS) the chain is on the nuclear side. A helical membrane pass occupies residues 82–102 (GLYSETEGTLILLFGGIPYLW). The Lumenal segment spans residues 103-123 (RLSGRFCGYAGFGPEYEITQS). Residues 124–144 (LVFLLLATLFSALTGLPWSLY) traverse the membrane as a helical segment. Residues 145–170 (NTFVIEEKHGFNQQTLGFFMKDAIKK) lie on the Nuclear side of the membrane. Residues 171–191 (FVVTQCILLPVSSLLLYIIKI) traverse the membrane as a helical segment. Residues 192 to 195 (GGDY) are Lumenal-facing. A helical transmembrane segment spans residues 196-216 (FFIYAWLFTLVVSLVLVTIYA). Residues 217–347 (DYIAPLFDKF…GHWKLGHTVK (131 aa)) are Nuclear-facing. Residue His335 coordinates Zn(2+). Glu336 is an active-site residue. His339 is a binding site for Zn(2+). A helical membrane pass occupies residues 348 to 368 (NIIISQMNSFLCFFLFAVLIG). Residues 369-382 (RKELFAAFGFYDSQ) lie on the Lumenal side of the membrane. The chain crosses the membrane as a helical span at residues 383-405 (PTLIGLLIIFQFIFSPYNEVLSF). Topologically, residues 406–475 (CLTVLSRRFE…LQALKTMKQH (70 aa)) are nuclear. Residue Glu415 participates in Zn(2+) binding.

The protein belongs to the peptidase M48A family. It depends on Zn(2+) as a cofactor. Widely expressed. High levels in kidney, prostate, testis and ovary.

The protein localises to the endoplasmic reticulum membrane. It localises to the nucleus inner membrane. It is found in the early endosome membrane. Its subcellular location is the late endosome membrane. The enzyme catalyses Hydrolyzes the peptide bond -P2-(S-farnesyl or geranylgeranyl)C-P1'-P2'-P3'-COOH where P1' and P2' are amino acids with aliphatic side chains and P3' is any C-terminal residue.. Its function is as follows. Transmembrane metalloprotease whose catalytic activity is critical for processing lamin A/LMNA on the inner nuclear membrane and clearing clogged translocons on the endoplasmic reticulum. Proteolytically removes the C-terminal three residues of farnesylated proteins. Also plays an antiviral role independently of its protease activity by restricting enveloped RNA and DNA viruses, including influenza A, Zika, Ebola, Sindbis, vesicular stomatitis, cowpox, and vaccinia. Mechanistically, controls IFITM antiviral pathway to hinder viruses from breaching the endosomal barrier by modulating membrane fluidity. The chain is CAAX prenyl protease 1 homolog from Homo sapiens (Human).